The chain runs to 289 residues: GTPase Era (289 aa).

The region spanning 2–167 (KSGFVSLIGR…LREIAKLLPE (166 aa)) is the Era-type G domain. Residues 10–17 (GRTNAGKS) form a G1 region. A GTP-binding site is contributed by 10-17 (GRTNAGKS). The tract at residues 36-40 (NATRR) is G2. Residues 57–60 (DTPG) form a G3 region. GTP is bound by residues 57–61 (DTPGL) and 116–119 (TKTD). The tract at residues 116–119 (TKTD) is G4. A G5 region spans residues 146–148 (VNI). A KH type-2 domain is found at 186–274 (YRDFILESVY…HLNLQIFVKK (89 aa)).

Belongs to the TRAFAC class TrmE-Era-EngA-EngB-Septin-like GTPase superfamily. Era GTPase family. Monomer.

The protein resides in the cytoplasm. It is found in the cell inner membrane. In terms of biological role, an essential GTPase that binds both GDP and GTP, with rapid nucleotide exchange. Plays a role in 16S rRNA processing and 30S ribosomal subunit biogenesis and possibly also in cell cycle regulation and energy metabolism. The polypeptide is GTPase Era (Campylobacter hominis (strain ATCC BAA-381 / DSM 21671 / CCUG 45161 / LMG 19568 / NCTC 13146 / CH001A)).